We begin with the raw amino-acid sequence, 381 residues long: uncharacterized protein (381 aa).

Transmembrane regions (helical) follow at residues 22–42 (GVLLTLAAVAVVASIGTYLTA) and 246–266 (LIPENVHWTIWQLWLVVLLVA).

It localises to the cell membrane. This is an uncharacterized protein from Mycobacterium tuberculosis (strain ATCC 25618 / H37Rv).